Consider the following 369-residue polypeptide: 3-dehydroquinate synthase (369 aa).

NAD(+) contacts are provided by residues 75–80 (DGEEHK), 109–113 (GVIGD), 133–134 (TT), Lys-146, Lys-155, and 173–176 (TLKT). The Zn(2+) site is built by Glu-188, His-251, and His-268.

Belongs to the sugar phosphate cyclases superfamily. Dehydroquinate synthase family. It depends on Co(2+) as a cofactor. Requires Zn(2+) as cofactor. The cofactor is NAD(+).

Its subcellular location is the cytoplasm. The enzyme catalyses 7-phospho-2-dehydro-3-deoxy-D-arabino-heptonate = 3-dehydroquinate + phosphate. The protein operates within metabolic intermediate biosynthesis; chorismate biosynthesis; chorismate from D-erythrose 4-phosphate and phosphoenolpyruvate: step 2/7. In terms of biological role, catalyzes the conversion of 3-deoxy-D-arabino-heptulosonate 7-phosphate (DAHP) to dehydroquinate (DHQ). This chain is 3-dehydroquinate synthase, found in Legionella pneumophila (strain Lens).